A 242-amino-acid chain; its full sequence is Ribonuclease PH (242 aa).

Phosphate-binding positions include Arg-87 and 125–127 (GTR).

It belongs to the RNase PH family. As to quaternary structure, homohexameric ring arranged as a trimer of dimers.

It carries out the reaction tRNA(n+1) + phosphate = tRNA(n) + a ribonucleoside 5'-diphosphate. Phosphorolytic 3'-5' exoribonuclease that plays an important role in tRNA 3'-end maturation. Removes nucleotide residues following the 3'-CCA terminus of tRNAs; can also add nucleotides to the ends of RNA molecules by using nucleoside diphosphates as substrates, but this may not be physiologically important. Probably plays a role in initiation of 16S rRNA degradation (leading to ribosome degradation) during starvation. The polypeptide is Ribonuclease PH (Thermosynechococcus vestitus (strain NIES-2133 / IAM M-273 / BP-1)).